Here is a 216-residue protein sequence, read N- to C-terminus: Imidazole glycerol phosphate synthase subunit HisH (216 aa).

Residues 2 to 216 (RVAIIDYGSG…LIANFLKWKP (215 aa)) enclose the Glutamine amidotransferase type-1 domain. The active-site Nucleophile is the C88. Residues H196 and E198 contribute to the active site.

As to quaternary structure, heterodimer of HisH and HisF.

Its subcellular location is the cytoplasm. It catalyses the reaction 5-[(5-phospho-1-deoxy-D-ribulos-1-ylimino)methylamino]-1-(5-phospho-beta-D-ribosyl)imidazole-4-carboxamide + L-glutamine = D-erythro-1-(imidazol-4-yl)glycerol 3-phosphate + 5-amino-1-(5-phospho-beta-D-ribosyl)imidazole-4-carboxamide + L-glutamate + H(+). The catalysed reaction is L-glutamine + H2O = L-glutamate + NH4(+). It participates in amino-acid biosynthesis; L-histidine biosynthesis; L-histidine from 5-phospho-alpha-D-ribose 1-diphosphate: step 5/9. Functionally, IGPS catalyzes the conversion of PRFAR and glutamine to IGP, AICAR and glutamate. The HisH subunit catalyzes the hydrolysis of glutamine to glutamate and ammonia as part of the synthesis of IGP and AICAR. The resulting ammonia molecule is channeled to the active site of HisF. The sequence is that of Imidazole glycerol phosphate synthase subunit HisH from Brucella suis biovar 1 (strain 1330).